Here is an 811-residue protein sequence, read N- to C-terminus: DEAD-box ATP-dependent RNA helicase 48 (811 aa).

2 disordered regions span residues 1-32 (MGGG…ERGL) and 93-138 (DDGP…EPRL). The span at 15-29 (WQHKRMHEKLARHKE) shows a compositional bias: basic residues. Basic and acidic residues-rich tracts occupy residues 95 to 104 (GPIHRADRPR) and 117 to 138 (GDRR…EPRL). A coiled-coil region spans residues 286 to 333 (RNCDMKKERRALKSYEEENNDLAGSFRELREEIKNREVLGAERRRYES). Positions 342–370 (KRFEECGISPLTVKALTDAGYVQTTVVQE) match the Q motif motif. Residues 373–556 (LPMCLEGKDV…QLVLKRDHVF (184 aa)) enclose the Helicase ATP-binding domain. 386 to 393 (AKTGTGKS) provides a ligand contact to ATP. The DEAD box signature appears at 504 to 507 (DEAD). Positions 570–740 (KVEQLYLVMP…EMKRKVDGSI (171 aa)) constitute a Helicase C-terminal domain.

This sequence belongs to the DEAD box helicase family.

The catalysed reaction is ATP + H2O = ADP + phosphate + H(+). This chain is DEAD-box ATP-dependent RNA helicase 48, found in Oryza sativa subsp. japonica (Rice).